We begin with the raw amino-acid sequence, 170 residues long: dCTP pyrophosphatase 1 (170 aa).

Positions 1 to 25 are disordered; that stretch reads MSQAGTGVCGNGGQEDSAAAGPFSF. Serine 2 bears the N-acetylserine mark. Serine 2 carries the post-translational modification Phosphoserine. Substrate is bound by residues histidine 38 and 47-51; that span reads WEQFH. Mg(2+) is bound by residues glutamate 63 and glutamate 66. Residue tryptophan 73 coordinates substrate. Mg(2+)-binding residues include glutamate 95 and aspartate 98. Tyrosine 102 is a substrate binding site. Residues 149 to 170 form a disordered region; sequence LSENEAVGSGDPASELGNQAST.

In terms of assembly, homotetramer. The cofactor is Mg(2+).

The protein localises to the cytoplasm. Its subcellular location is the cytosol. The enzyme catalyses dCTP + H2O = dCMP + diphosphate + H(+). Functionally, hydrolyzes deoxynucleoside triphosphates (dNTPs) to the corresponding nucleoside monophosphates. Has a strong preference for dCTP and its analogs including 5-iodo-dCTP and 5-methyl-dCTP for which it may even have a higher efficiency. May protect DNA or RNA against the incorporation of these genotoxic nucleotide analogs through their catabolism. This Rattus norvegicus (Rat) protein is dCTP pyrophosphatase 1.